A 125-amino-acid polypeptide reads, in one-letter code: MIVGIGTDLAEVARFEQLLARHGQRVARRMLAAAELDEFARAADPARFLAKRFAAKEAFAKAAGTGVRAPVLLPAIAVTHDELGKPAFACSAVLHDWLTARGVQRMHVSISDERTHCLAFVVFEG.

Residues Asp-8 and Glu-57 each contribute to the Mg(2+) site.

It belongs to the P-Pant transferase superfamily. AcpS family. Mg(2+) serves as cofactor.

The protein resides in the cytoplasm. The catalysed reaction is apo-[ACP] + CoA = holo-[ACP] + adenosine 3',5'-bisphosphate + H(+). Its function is as follows. Transfers the 4'-phosphopantetheine moiety from coenzyme A to a Ser of acyl-carrier-protein. This is Holo-[acyl-carrier-protein] synthase from Laribacter hongkongensis (strain HLHK9).